We begin with the raw amino-acid sequence, 350 residues long: Histidinol-phosphate aminotransferase 1 (350 aa).

K209 is subject to N6-(pyridoxal phosphate)lysine.

The protein belongs to the class-II pyridoxal-phosphate-dependent aminotransferase family. Histidinol-phosphate aminotransferase subfamily. Homodimer. Pyridoxal 5'-phosphate serves as cofactor.

It carries out the reaction L-histidinol phosphate + 2-oxoglutarate = 3-(imidazol-4-yl)-2-oxopropyl phosphate + L-glutamate. It participates in amino-acid biosynthesis; L-histidine biosynthesis; L-histidine from 5-phospho-alpha-D-ribose 1-diphosphate: step 7/9. This is Histidinol-phosphate aminotransferase 1 (hisC1) from Bradyrhizobium diazoefficiens (strain JCM 10833 / BCRC 13528 / IAM 13628 / NBRC 14792 / USDA 110).